A 930-amino-acid polypeptide reads, in one-letter code: Isoleucine--tRNA ligase (930 aa).

A 'HIGH' region motif is present at residues 57–67 (PYANGNIHVGH). Residue glutamate 554 coordinates L-isoleucyl-5'-AMP. Positions 595–599 (KMSKS) match the 'KMSKS' region motif. Lysine 598 lines the ATP pocket. Residues cysteine 888, cysteine 891, cysteine 908, and cysteine 911 each coordinate Zn(2+).

Belongs to the class-I aminoacyl-tRNA synthetase family. IleS type 1 subfamily. In terms of assembly, monomer. It depends on Zn(2+) as a cofactor.

It localises to the cytoplasm. It catalyses the reaction tRNA(Ile) + L-isoleucine + ATP = L-isoleucyl-tRNA(Ile) + AMP + diphosphate. Catalyzes the attachment of isoleucine to tRNA(Ile). As IleRS can inadvertently accommodate and process structurally similar amino acids such as valine, to avoid such errors it has two additional distinct tRNA(Ile)-dependent editing activities. One activity is designated as 'pretransfer' editing and involves the hydrolysis of activated Val-AMP. The other activity is designated 'posttransfer' editing and involves deacylation of mischarged Val-tRNA(Ile). This Streptococcus pneumoniae serotype 19F (strain G54) protein is Isoleucine--tRNA ligase.